A 236-amino-acid polypeptide reads, in one-letter code: Thiamine import ATP-binding protein ThiQ (236 aa).

The region spanning 2 to 230 is the ABC transporter domain; that stretch reads LKLEKITYLY…SAAKASVLGI (229 aa). 32 to 39 contributes to the ATP binding site; sequence GPSGAGKS.

This sequence belongs to the ABC transporter superfamily. Thiamine importer (TC 3.A.1.19.1) family. The complex is composed of two ATP-binding proteins (ThiQ), two transmembrane proteins (ThiP) and a solute-binding protein (ThiB).

The protein resides in the cell inner membrane. The enzyme catalyses thiamine(out) + ATP + H2O = thiamine(in) + ADP + phosphate + H(+). Part of the ABC transporter complex ThiBPQ involved in thiamine import. Responsible for energy coupling to the transport system. The sequence is that of Thiamine import ATP-binding protein ThiQ from Yersinia pseudotuberculosis serotype I (strain IP32953).